Reading from the N-terminus, the 252-residue chain is Trans-aconitate 2-methyltransferase (252 aa).

The protein belongs to the methyltransferase superfamily. Tam family.

Its subcellular location is the cytoplasm. The catalysed reaction is trans-aconitate + S-adenosyl-L-methionine = (E)-3-(methoxycarbonyl)pent-2-enedioate + S-adenosyl-L-homocysteine. Catalyzes the S-adenosylmethionine monomethyl esterification of trans-aconitate. This is Trans-aconitate 2-methyltransferase from Escherichia coli O1:K1 / APEC.